Reading from the N-terminus, the 179-residue chain is Large ribosomal subunit protein uL5 (179 aa).

The protein belongs to the universal ribosomal protein uL5 family. In terms of assembly, part of the 50S ribosomal subunit; part of the 5S rRNA/L5/L18/L25 subcomplex. Contacts the 5S rRNA and the P site tRNA. Forms a bridge to the 30S subunit in the 70S ribosome.

This is one of the proteins that bind and probably mediate the attachment of the 5S RNA into the large ribosomal subunit, where it forms part of the central protuberance. In the 70S ribosome it contacts protein S13 of the 30S subunit (bridge B1b), connecting the 2 subunits; this bridge is implicated in subunit movement. Contacts the P site tRNA; the 5S rRNA and some of its associated proteins might help stabilize positioning of ribosome-bound tRNAs. The chain is Large ribosomal subunit protein uL5 from Cronobacter sakazakii (strain ATCC BAA-894) (Enterobacter sakazakii).